Reading from the N-terminus, the 415-residue chain is MQLTAVGLNHQTAPLSIREKLAFAAACLPEAVRNLARSNAATEAVILSTCNRTELYCVGDSEEIIRWLADYHSLPIEEISPYLYTLGMQETVRHAFRVACGLDSMVLGEPQILGQIKDAVRVAQEQESMGKKLNALFQKTFSVAKEIRTDTAVGENSVSMASASVKLAEQIFPDIGDLNVLFIGAGEMIELVATYFAAKSPRLMTVANRTLARAQELCDKLGVNAEPCLLSDLPAILHEYDVVVSSTASQLPIVGKGMVERALKQRQSMPLFMLDLAVPRDIEAEVGDLNDAYLYTVDDMVNIVQSGKEARQKAAAAAETLVSEKVAEFVRQQQGRQSVPLIRALRDEGEKARKQVLENAMKQLAKGATAEEVLERLSIQLTNKLLHSPTQTLNKAGEEDKDLVHAVAQIYHLDK.

Residues 49-52 (TCNR), Ser-104, 109-111 (EPQ), and Gln-115 contribute to the substrate site. Cys-50 functions as the Nucleophile in the catalytic mechanism. 184 to 189 (GAGEMI) serves as a coordination point for NADP(+).

The protein belongs to the glutamyl-tRNA reductase family. As to quaternary structure, homodimer.

It catalyses the reaction (S)-4-amino-5-oxopentanoate + tRNA(Glu) + NADP(+) = L-glutamyl-tRNA(Glu) + NADPH + H(+). It functions in the pathway porphyrin-containing compound metabolism; protoporphyrin-IX biosynthesis; 5-aminolevulinate from L-glutamyl-tRNA(Glu): step 1/2. Functionally, catalyzes the NADPH-dependent reduction of glutamyl-tRNA(Glu) to glutamate 1-semialdehyde (GSA). In Neisseria meningitidis serogroup C (strain 053442), this protein is Glutamyl-tRNA reductase.